Consider the following 412-residue polypeptide: Adenosine receptor A2a (412 aa).

Over M1 to S7 the chain is Extracellular. The chain crosses the membrane as a helical span at residues V8–W32. At L33–N42 the chain is on the cytoplasmic side. The helical transmembrane segment at Y43–I66 threads the bilayer. Topologically, residues S67–C77 are extracellular. 3 disulfides stabilise this stretch: C71/C159, C74/C146, and C77/C166. The helical transmembrane segment at L78–I100 threads the bilayer. Residues D101–R120 lie on the Cytoplasmic side of the membrane. A helical transmembrane segment spans residues A121–W143. The Extracellular segment spans residues N144–P173. N-linked (GlcNAc...) asparagine glycosylation occurs at N154. Residue E169 coordinates adenosine. Residues M174 to L198 traverse the membrane as a helical segment. Topologically, residues R199–S234 are cytoplasmic. Residues L235–F258 form a helical membrane-spanning segment. N253 provides a ligand contact to adenosine. Cysteines 259 and 262 form a disulfide. At C259–P266 the chain is on the extracellular side. The chain crosses the membrane as a helical span at residues L267–Y290. Positions 277 and 278 each coordinate adenosine. The Cytoplasmic segment spans residues R291–S412. The segment at K391 to S412 is disordered.

This sequence belongs to the G-protein coupled receptor 1 family. In terms of assembly, interacts (via cytoplasmic C-terminal domain) with USP4; the interaction is direct. May interact with DRD4. Interacts with NECAB2. Interacts (via cytoplasmic C-terminal domain) with GAS2L2; interaction enhances receptor-mediated adenylyl cyclase activity. Ubiquitinated. Deubiquitinated by USP4; leading to stabilization and expression at the cell surface.

The protein resides in the cell membrane. Receptor for adenosine. The activity of this receptor is mediated by G proteins which activate adenylyl cyclase. The polypeptide is Adenosine receptor A2a (ADORA2A) (Homo sapiens (Human)).